A 733-amino-acid chain; its full sequence is Lanosterol synthase (733 aa).

Thr2 is subject to N-acetylthreonine. The PFTB 1 repeat unit spans residues 125–166 (REEMVRYLRSVQLPDGGWGLHIEDKSTVFGTALNYVALRILG). Asp456 serves as the catalytic Proton donor. 3 PFTB repeats span residues 484 to 529 (LCDA…MIDY), 561 to 601 (LNQG…ACMG), and 613 to 654 (VAQA…HSTC).

This sequence belongs to the terpene cyclase/mutase family. As to quaternary structure, monomer.

It is found in the endoplasmic reticulum membrane. The catalysed reaction is (S)-2,3-epoxysqualene = lanosterol. Its pathway is terpene metabolism; lanosterol biosynthesis; lanosterol from farnesyl diphosphate: step 3/3. Key enzyme in the cholesterol biosynthesis pathway. Catalyzes the cyclization of (S)-2,3 oxidosqualene to lanosterol, a reaction that forms the sterol nucleus. Through the production of lanosterol may regulate lens protein aggregation and increase transparency. This is Lanosterol synthase from Mus musculus (Mouse).